A 137-amino-acid chain; its full sequence is Hydrogenase maturation factor HypA (137 aa).

Residue H2 coordinates Ni(2+). Zn(2+)-binding residues include C73, C75, C105, and C108.

The protein belongs to the HypA/HybF family.

Functionally, involved in the maturation of [NiFe] hydrogenases. Required for nickel insertion into the metal center of the hydrogenase. The chain is Hydrogenase maturation factor HypA from Methanosarcina mazei (strain ATCC BAA-159 / DSM 3647 / Goe1 / Go1 / JCM 11833 / OCM 88) (Methanosarcina frisia).